The chain runs to 600 residues: Elongation factor 4 (600 aa).

A tr-type G domain is found at 5 to 187 (KYIRNFSIIA…AIVSKLPPPK (183 aa)). GTP contacts are provided by residues 17-22 (DHGKST) and 134-137 (NKLD).

This sequence belongs to the TRAFAC class translation factor GTPase superfamily. Classic translation factor GTPase family. LepA subfamily.

It is found in the cell inner membrane. It carries out the reaction GTP + H2O = GDP + phosphate + H(+). Required for accurate and efficient protein synthesis under certain stress conditions. May act as a fidelity factor of the translation reaction, by catalyzing a one-codon backward translocation of tRNAs on improperly translocated ribosomes. Back-translocation proceeds from a post-translocation (POST) complex to a pre-translocation (PRE) complex, thus giving elongation factor G a second chance to translocate the tRNAs correctly. Binds to ribosomes in a GTP-dependent manner. In Rickettsia rickettsii (strain Iowa), this protein is Elongation factor 4.